Here is a 316-residue protein sequence, read N- to C-terminus: Aspartate carbamoyltransferase catalytic subunit (316 aa).

Carbamoyl phosphate-binding residues include Arg-56 and Thr-57. Lys-84 contacts L-aspartate. Residues Arg-106, His-139, and Gln-142 each contribute to the carbamoyl phosphate site. The L-aspartate site is built by Arg-172 and Arg-226. The carbamoyl phosphate site is built by Gly-267 and Pro-268.

Belongs to the aspartate/ornithine carbamoyltransferase superfamily. ATCase family. As to quaternary structure, heterododecamer (2C3:3R2) of six catalytic PyrB chains organized as two trimers (C3), and six regulatory PyrI chains organized as three dimers (R2).

The enzyme catalyses carbamoyl phosphate + L-aspartate = N-carbamoyl-L-aspartate + phosphate + H(+). It functions in the pathway pyrimidine metabolism; UMP biosynthesis via de novo pathway; (S)-dihydroorotate from bicarbonate: step 2/3. Functionally, catalyzes the condensation of carbamoyl phosphate and aspartate to form carbamoyl aspartate and inorganic phosphate, the committed step in the de novo pyrimidine nucleotide biosynthesis pathway. This is Aspartate carbamoyltransferase catalytic subunit from Mycobacterium sp. (strain MCS).